We begin with the raw amino-acid sequence, 265 residues long: 2-C-methyl-D-erythritol 4-phosphate cytidylyltransferase (265 aa).

The segment covering 231–241 (DRGGASREAER) has biased composition (basic and acidic residues). Residues 231–265 (DRGGASREAERSAMPSAATSVFSGARSAASGSEEV) are disordered. Over residues 253-265 (SGARSAASGSEEV) the composition is skewed to low complexity.

The protein belongs to the IspD/TarI cytidylyltransferase family. IspD subfamily.

It catalyses the reaction 2-C-methyl-D-erythritol 4-phosphate + CTP + H(+) = 4-CDP-2-C-methyl-D-erythritol + diphosphate. It participates in isoprenoid biosynthesis; isopentenyl diphosphate biosynthesis via DXP pathway; isopentenyl diphosphate from 1-deoxy-D-xylulose 5-phosphate: step 2/6. Catalyzes the formation of 4-diphosphocytidyl-2-C-methyl-D-erythritol from CTP and 2-C-methyl-D-erythritol 4-phosphate (MEP). The chain is 2-C-methyl-D-erythritol 4-phosphate cytidylyltransferase from Xanthomonas campestris pv. campestris (strain B100).